The primary structure comprises 110 residues: Small ribosomal subunit protein bS16 (110 aa).

Residues 87-110 (ARNNPEKAVPRKERKAAAEAAAKK) form a disordered region.

Belongs to the bacterial ribosomal protein bS16 family.

The chain is Small ribosomal subunit protein bS16 from Rhodopseudomonas palustris (strain BisA53).